The sequence spans 433 residues: Enolase (433 aa).

A (2R)-2-phosphoglycerate-binding site is contributed by Gln164. The active-site Proton donor is the Glu206. The Mg(2+) site is built by Asp243, Glu289, and Asp316. (2R)-2-phosphoglycerate is bound by residues Lys341, Arg370, Ser371, and Lys392. The active-site Proton acceptor is Lys341.

It belongs to the enolase family. Mg(2+) is required as a cofactor.

It localises to the cytoplasm. It is found in the secreted. The protein resides in the cell surface. The enzyme catalyses (2R)-2-phosphoglycerate = phosphoenolpyruvate + H2O. The protein operates within carbohydrate degradation; glycolysis; pyruvate from D-glyceraldehyde 3-phosphate: step 4/5. In terms of biological role, catalyzes the reversible conversion of 2-phosphoglycerate (2-PG) into phosphoenolpyruvate (PEP). It is essential for the degradation of carbohydrates via glycolysis. The sequence is that of Enolase from Borreliella burgdorferi (strain ZS7) (Borrelia burgdorferi).